Reading from the N-terminus, the 169-residue chain is Dihydrofolate reductase type 8 (169 aa).

One can recognise a DHFR domain in the interval 3–169 (ELHAILAATA…FTYRKKELTE (167 aa)).

This sequence belongs to the dihydrofolate reductase family. In terms of assembly, homodimer.

The enzyme catalyses (6S)-5,6,7,8-tetrahydrofolate + NADP(+) = 7,8-dihydrofolate + NADPH + H(+). It participates in cofactor biosynthesis; tetrahydrofolate biosynthesis; 5,6,7,8-tetrahydrofolate from 7,8-dihydrofolate: step 1/1. Functionally, key enzyme in folate metabolism. Catalyzes an essential reaction for de novo glycine and purine synthesis, and for DNA precursor synthesis. The chain is Dihydrofolate reductase type 8 (dhfrVIII) from Escherichia coli.